We begin with the raw amino-acid sequence, 622 residues long: ABC transporter permease protein YxdM (622 aa).

Transmembrane regions (helical) follow at residues Ala-20–Phe-40, Gly-56–Val-76, Ala-118–Leu-138, Ile-154–Val-174, Pro-195–Leu-215, Val-219–Phe-239, Leu-279–Met-299, Thr-498–Val-518, Ile-558–Ala-578, and Val-590–Leu-610.

Belongs to the ABC-4 integral membrane protein family. In terms of assembly, the complex is composed of two ATP-binding proteins (YxdL) and two transmembrane proteins (YxdM).

It is found in the cell membrane. Its function is as follows. Part of the ABC transporter complex YxdLM which could be involved in peptide resistance. The chain is ABC transporter permease protein YxdM (yxdM) from Bacillus subtilis (strain 168).